The chain runs to 345 residues: Selenide, water dikinase (345 aa).

C16 is a catalytic residue. ATP is bound by residues K19 and 46–48 (TSD). D49 contributes to the Mg(2+) binding site. Residues D66, D89, and 136-138 (GHT) each bind ATP. Residue D89 participates in Mg(2+) binding. Mg(2+) is bound at residue D224.

It belongs to the selenophosphate synthase 1 family. Class I subfamily. In terms of assembly, homodimer. Mg(2+) serves as cofactor.

The enzyme catalyses hydrogenselenide + ATP + H2O = selenophosphate + AMP + phosphate + 2 H(+). Synthesizes selenophosphate from selenide and ATP. The polypeptide is Selenide, water dikinase (Clostridium botulinum (strain Eklund 17B / Type B)).